The following is a 335-amino-acid chain: Phenylalanine--tRNA ligase alpha subunit (335 aa).

Glutamate 262 lines the Mg(2+) pocket.

The protein belongs to the class-II aminoacyl-tRNA synthetase family. Phe-tRNA synthetase alpha subunit type 1 subfamily. As to quaternary structure, tetramer of two alpha and two beta subunits. Mg(2+) serves as cofactor.

It is found in the cytoplasm. It catalyses the reaction tRNA(Phe) + L-phenylalanine + ATP = L-phenylalanyl-tRNA(Phe) + AMP + diphosphate + H(+). The polypeptide is Phenylalanine--tRNA ligase alpha subunit (Prochlorococcus marinus subsp. pastoris (strain CCMP1986 / NIES-2087 / MED4)).